A 2291-amino-acid chain; its full sequence is Protein Ycf2 A (2291 aa).

1642–1649 (GSIGTGRS) lines the ATP pocket.

Belongs to the Ycf2 family.

It is found in the plastid. Its subcellular location is the chloroplast stroma. Probable ATPase of unknown function. Its presence in a non-photosynthetic plant (Epifagus virginiana) and experiments in tobacco indicate that it has an essential function which is probably not related to photosynthesis. This is Protein Ycf2 A (ycf2-A) from Atropa belladonna (Belladonna).